We begin with the raw amino-acid sequence, 186 residues long: MLDTANYTPRLKAAFSETIKAAMKEEFGYKNDMQIPRLEKIVLNIGSGAESVRDTKKAKSAQEDLTAIAGQHAVVTKAKKSIAGFRLREEHPVGAKVTLRGDRMYDFLDRLTTIAMPRIRDFRGVKPSFDGRGNFAMGMKEHIVFPEINFDKIDVAWGMDIIIVTTANTDAEAKSLLAHFNMPFNA.

The protein belongs to the universal ribosomal protein uL5 family. Part of the 50S ribosomal subunit; part of the 5S rRNA/L5/L18/L25 subcomplex. Contacts the 5S rRNA and the P site tRNA. Forms a bridge to the 30S subunit in the 70S ribosome.

Functionally, this is one of the proteins that bind and probably mediate the attachment of the 5S RNA into the large ribosomal subunit, where it forms part of the central protuberance. In the 70S ribosome it contacts protein S13 of the 30S subunit (bridge B1b), connecting the 2 subunits; this bridge is implicated in subunit movement. Contacts the P site tRNA; the 5S rRNA and some of its associated proteins might help stabilize positioning of ribosome-bound tRNAs. The chain is Large ribosomal subunit protein uL5 from Jannaschia sp. (strain CCS1).